The primary structure comprises 604 residues: Linalool synthase Tps-5073L4, chloroplastic (604 aa).

The N-terminal 36 residues, 1-36, are a transit peptide targeting the chloroplast; that stretch reads MSSMRIYVAIMKKPSVKHVDYVDKKASKPSWRVSSS. (2E)-geranyl diphosphate is bound by residues Arg323, Asp360, Asp364, Arg501, and Asp504. Mg(2+) contacts are provided by Asp360 and Asp364. The DDXXD motif motif lies at 360 to 364; it reads DDVYD. 3 residues coordinate Mg(2+): Asp504, Thr508, and Glu512.

This sequence belongs to the terpene synthase family. Tpsb subfamily. In terms of assembly, monomer. Mg(2+) serves as cofactor. Mn(2+) is required as a cofactor.

The protein localises to the plastid. The protein resides in the chloroplast. It catalyses the reaction (2E)-geranyl diphosphate + H2O = linalool + diphosphate. It functions in the pathway secondary metabolite biosynthesis; terpenoid biosynthesis. Its function is as follows. Monoterpene synthase (mono-TPS) involved in the biosynthesis of monoterpenes natural products. Catalyzes the conversion of (2E)-geranyl diphosphate (GPP) into linalool. In Perilla frutescens (Beefsteak mint), this protein is Linalool synthase Tps-5073L4, chloroplastic.